Reading from the N-terminus, the 5588-residue chain is MDSQKPPAEDKDSDPAADGLAAPEKPGATEPDLPILCIGEVSVPGSGGSRPQKPPHDCSRGPARRCALCNCGEPGLHGQRELQRFELPSDWPGFPVVPSGGNSGPCEAVLPKEDASQIGFPEGLTPAHLGEPGGHCWAHHWCAAWSAGVWGQEGPELCGVDKAIFSGISQRCSHCARFGASVPCRSPGCSRLYHFPCATASGSFLSMKTLQLLCPEHSDGAAHLEEARCAVCEGPGQLCDLLFCTSCGHHYHGACLDTALTARKRASWQCPECKVCQSCRKPGNDSKMLVCETCDKGYHTFCLKPPMEDLPAHSWKCKTCRLCRACGAGSAELNPNSEWFENYSLCHRCHKAQGSQPVTSVAEQHPAVCSRLSPPEPGEIPIDAPDALYVACQGQPKGGHVTSMQPKELAPLQCEAKPLGRAGTQLEAQLEAPLHEEMPLLPPPEESPLSPPPEESPTSPPPEASRLSPPTEESPLSPPPESSPFSPLEGCPPSPALDTPLSPPPEASPLSPPFEESPLSPPPEELPSSPPPEASRLSPPPEESPMSPPPEESPMSPPPEASRLFPPFEESPLSPPPEDSPLSPPPEASRLSPPPEDSPMSPPPEDSPMSPPPEVSRFLPLPVLSHLSPLPEVSRLSPPPEESPLSPPPEDSPASPPPEASRLSPPPEDSPASPPPEASRLSRPREDSPASPPPEDSLVSLPMEESPLSPLPEELRLCPQPEEPYLSPQPEEPRLCPQPEELPLSPQSEEPCLSPVLVEPGPSSQPEEPHLSPVPQEPHLSPQPEEPHLSPQPQQLHLSPHSEEPCLSPMPEEPCLSPQPEELNGPPQPAEPPEEPSQSSAPKELSLFSPSGEPPLPPMLGEPALSEPGEPPLSPLPEELPLSLSGEPVLSPQLMPPDPLPPPLSPIIPAAAPPALSPLGELEYPFGAKGDSDPESPLAAPILETPISPPPEANCTDPEPVPPMILPPSPGSPLGPASPILMERLPPPCSPLLPHSLPPPTPPPSHCSPPALPLSVPSPLSPVQKAVDVSDEAELHEMETDKGPEPECPALEPRATSPLPSPLGDLSCPAPSPAPALDDFSGLGEDTAPLDGTGQMSGSLAGELKGSPVLLDPEELTPVTPMEVYGPECKQAGQGSPCEEQEEPGAPMAPMPPTLIKSDIVNEISNLSQGDASASFPGSEPLLGSPDPEGGGSLSMELGVSTDVSPARDEGSLRLCTDSLPETDDSLLCDTGTATSGGKAEGDKGRRRSSPARSRIKQGRSSSFPGRRRPRGGAAHGGRGRGRARLKSTTSSVETLVADIDSSPSKEEEEEDDDTMQNTVVLFSNTDKFVLMQDMCVVCGSFGRGAEGHLLACSQCSQCYHPYCVNSKITKVMLLKGWRCVECIVCEVCGQASDPSRLLLCDDCDISYHTYCLDPPLLTVPKGGWKCKWCVSCMQCGAASPGFHCEWQNSYTHCGPCASLVTCPVCHAPYVEEDLLIQCRHCERWMHAGCESLFTEDEVEQAADEGFDCVSCQPYVVKPVVPVAPPELVPVKVKEPEPQFFRFEGVWLTETGMAVLRNLTMSPLHKRRQRRGRLGLPGEAGLEGSEPSDALGPDDKKDGDLDTDDLLKGEGGVEQMECEIKLEGPASPDVELGKEETEESKKRKRKPYRPGIGGFMVRQRKSHTRVKRGPAAQAEVLSGDGQPDEVMPADLPAEGSVEQSLAEGDEKKKQQRRARKKSKLEDMFPAYLQAAFFGKDLLDLSRKALFAVGVGRPGFGLGASKPRADGGSDRKELMTAMHKGDDGPDVADEESHGPEGTADLPGLEDGGVKASPVPSDPEKPGTPGEGVLSSDLDRIPTEELPKMESKDLQQLFKDVLGSEREQHLGCGTPGLEGGRTSLQRPFLQGGLALGSLPSSSPMDSYPGLCQSPFLDSRERGGFFSPEPGEPDSPWTGSGGTTPSTPTTPTTEGEGDGLSYNQRSLQRWEKDEELGQLSTISPVLYANINFPNLKQDYPDWSSRCKQIMKLWRKVPAADKAPYLQKAKDNRAAHRISKVQKQAESQISKQAKMGDIARKTDRPALHLRIPSQPGALGSPPPAAAPTIFLGSPTTPAGLSTSADGFLKPPAGTVPGPDSPGELFLKLPPQVPAQVPSQDPFGLAPAYAPEPRFSAAPPTYPPYPSPTGAPAQPPMLGTTTRPGTGQPGEFHTTPPGTPRHQPSTPDPFLKPRCPSLDNLAVPESPGVAGGKASEPLLSPPPFGESRKSLEVKKEELGASSPGYGPPNLGCVDSPSAGPHLGGLELKAPDVFKAPLTPRASQVEPQSPGLGLRAQEPPPAQALAPSPPSHPDVFRSGPYPDPYAQPPLTPRPQPPPPESCCAPPPRSLPSDPFSRVPASPQSQSSSQSPLTPRPLSAEAFCPSPVTPRFQSPDPYSRPPSRPQSRDPFAPLHKPPRPQPPEVAFKAGPLAHTPLGAGGFPAALPSGPAGELHAKVPSGQPTNFARSPGTGTFVGTPSPMRFTFPQGVGEPSLKPPVPQPGLPSPHGINSHFGPGPTLGKPQSTNYAVATGNFHPSGSPLGPNSGPTGEGYGLSPLRPASVLPPPAPDGSLPYLTHGASQRVGITSPVEKREDPGATMSSSSLATPELSSAQDAGISSLSQTELEKQRQRQRLRELLIRQQIQRNTLRQEKETAAAAAGAVGPPGNWGAEPSSPAFEQLSRGQTPFTGSQDRSSIVGLPASKLGGPTLGPGAFSSDDRLARPLPPATPSSMDMNSRQLVGGSQAFYQRTPYPGSLPLQQQQQQQQQQQQQQQQQQQQQQQQQQQQQLWQQQQQQQQQQQQQAAAAAAATSMRLAMSARFPSTPGPELGRQALGSPLAGIPTRLPGPAEPVPGPAGPAQFIELRHNVQKGLGPGVSPFPGQGPPQRPRFYPVSEELHRLAPEGLRGLAVPGLPSQKPSALPAPELNNSLHQTPHAKGPALASGLELVSRPPSNTELSRPPLALEAGKLPCEDPELDDDFDAHKALEDDEELAHLGLGVDVAKGDDELGTLENLETNDPHLDDLLNGDEFDLLAYTDPELDTGDKKDIFNEHLRLVESANEKAEREALLRGVEPVSLGPEERPPPAPDNSEPRLTSVLPEVKPKVEEGGRHPSPCQFTINTPKVEPAPPATSLSLGLKPGQTVMGTRDTRGGVGTGSFPSSGHTAEKGPFGATGGTPAHLLNPSSLSGPAASSLLEKFELESGALTLPSGHAAAGDELDKMESSLVASELPLLIEDLLEHEKKELQKKQQLSAQTVLPAQQQQQQQQQQQQQQQQHTLLPTPGPAQALPLPHEPGPPQQLALGIGSTRQPGLGQSMVPIQPPAHALQQRLAPSVAMVSNQGHMLSGQQAGQTGLVPQQSSQPVLAQKPMSAMPASMCMKPQQLAMQQQQLANSFFPDTDLDKFAAEDIIDPIAKAKMVALKGIKKVMAQGSIGVAPGMNRQQVSLLAQRLSGGSGSDLQNHVAPGSGQERNAGDPAQPRPNPPTFAQGVINEADQRQYEEWLFHTQQLLQMQLKVLEEQIGVHRKSRKALCAKQRTAKKAGREFPEADAEKLKLVTEQQSKIQKQLDQVRKQQKEHTNLMAEYRNKQQQQQQQQQQQQQQQHSAVLAVSPSQNPRVLTKLPGQLLPAHGLQPPQAPPGGQAGGLRLPPGGMVLPGQSGGPFLNTTLAQQQQQQHSGVAGSLTGPPGSFFPGNLALRSLGPDSRLLQERQLQLQQQRMQLAQKLQQQQQQQQQQQQQQHLLGQVAIQQQQGPGVQNQALGPKPQGLLPPSNHQGLLVQQLSPQQSQGSQGLLGPAQVTVLQQQQQQQQHSGALGPQGPHRQVLMTQSRVLSSPQLAQQGHSLMGHRLLTAQQQQQQQQQQQQQQQQQQQQQQQQQGSMTGLSQLQQGMMSHGGQPKMSAQALGSLQQQQQQLQQQQMLQQQQLQQQQQQLQQQQQQQQLQQQQQQQLQLQQQQQQQQQHLQHQQQQQQQLQQQQQLQQQQQQQLHLQQQLHQQQQLQLQQQQMGLLNQNRTLLSPQQQQQQQQQQQQQQQQQQQQQQQQQQVTLGPGLPVKPLQHFSSSGALGPTLLLTGKEQNNAETALPSEVTEGPSTHQGGPPAVGTAPEPMSVEPGEVKPSISGDSQLLLVQSQAQSQATSVQLQPPLRLPGQPQPQVNLLHTAGGGSHGQQLGSGSSSESPAVPHLLAQPSVSLGEQPGPMAQNLLGSQQPLGLDRPIQNNTGSQPPKSGPAPQSGQGPPGAGVMPTVGQLRAQLQGVLAKNPQLRHLSPQQQQQLQALLMQRQLQQSQAVRQTPPFQEPGTQPSPLQGLLGCQPQPGGFSVSQTGPLQELGAGSRPQGPPRLPVPQGALSTGPVLGPAHPTPPPSSPQEPKRPSQLPSPSAQLTPTHPGTPKPQGPALELPPGRVSPAAAQLADTFFGKGLGPWDPSDNLTEAQKPEQSSLVPGHLDQVNGQVVHEPSQLSIKQEPREEPCALGAQTVKREANGEPAGAPGTSNHLLLAGSRSEAGHLLLQKLLRAKNVQLGAGRGPEGLRAEINGHIDSKLSGLEQKLQGTSSNKEDAATRKPLPAKPKRVQKTSDRLPSSRKKLRKEDGVRANEALLKQLKQELSQLPLTEPTITANFSLFAPFGSGCLVSGQSQLRGAFGSGALHTGPDYYSQLLTKNNLSNPPTPPSSLPPTPPPSVQQKMVNGVTPSDELGERPKDTASAQDSEGALRDAAEVKSLDLLAALPTPPHNQTEDVRMESDEDSDSPDSIVPASSPESILGEEAPRFPQLGSGRWEQDNRALSPVIPIIPRTGIPVFPDTKPYGVLDLEVPGKLPATAWEKGKGSEVSVMLTVSAAAAKNLNGVMVAVAELLSMKIPNSYEVLFPDGPARAGLEPKKGEAEGPGGKEKGLSGKGPDTGPDWLKQFDAVLPGYTLKSQLDILSLLKQESPAPEPSIQHSYTYNVSNLDVRQLSAPPPEEPSPPPSPLAPSPASPPAEPMVELQAERPAEPPIPSPLPLASSPESARPKPRARPPEESEDSRPPRLKKWKGVRWKRLRLLLTIQKGSGHQEDEREVAEFMEQFGTALRPSKVPRDNRRCCFCHEEGDGATDGPARLLNLDLDLWVHLNCALWSTEVYETQGGALMNVEVALHRGLLTKCSLCQRTGATSSCNRMRCPNVYHFACAIRAKCMFFKDKTMLCPVHKIKGPCEQELSSFAVFRRVYIERDEVKQIASIIQRGERLHMFRVGGLVFHAIGQLLPHQMADFHSATALYPVGYEATRIYWSLRTNNRRCCYRCSISENNGRPEFVIKVIEQGLEDLVFTDASPQAVWNRIIEPVAAMRKEADMLRLFPEYLKGEELFGLTVHAVLRIAESLPGVESCQNYLFRYGRHPLMELPLMINPTGCARSEPKILTHYKRPHTLNSTSMSKAYQSTFTGETNTPYSKQFVHSKSSQYRRLRTEWKNNVYLARSRIQGLGLYAAKDLEKHTMVIEYIGTIIRNEVANRREKIYEEQNRGIYMFRINNEHVIDATLTGGPARYINHSCAPNCVAEVVTFDKEDKIIIISSRRIPKGEELTYDYQFDFEDDQHKIPCHCGAWNCRKWMN.

The interval 1-61 is disordered; sequence MDSQKPPAED…QKPPHDCSRG (61 aa). Residues 104–149 form a C2HC pre-PHD-type 1; degenerate zinc finger; it reads GPCEAVLPKEDASQIGFPEGLTPAHLGEPGGHCWAHHWCAAWSAGV. 2 consecutive PHD-type zinc fingers follow at residues 170–218 and 270–323; these read QRCS…PEHS and CPEC…CRLC. The segment at 226–276 adopts a PHD-type 2; degenerate zinc-finger fold; sequence EARCAVCEGPGQLCDLLFCTSCGHHYHGACLDTALTARKRASWQCPECKVC. The RING-type 1; atypical zinc-finger motif lies at 229–274; the sequence is CAVCEGPGQLCDLLFCTSCGHHYHGACLDTALTARKRASWQCPECK. An RING-type 2; degenerate zinc finger spans residues 276–321; it reads CQSCRKPGNDSKMLVCETCDKGYHTFCLKPPMEDLPAHSWKCKTCR. Disordered stretches follow at residues 438–908 and 922–1315; these read MPLL…SPII and LEYP…DDDT. Residues 439-642 form a 15 X 5 AA repeats of S/P-P-P-E/P-E/A region; that stretch reads PLLPPPEESP…VSRLSPPPEE (204 aa). Residues 440–463 are compositionally biased toward pro residues; that stretch reads LLPPPEESPLSPPPEESPTSPPPE. A run of 4 repeats spans residues 442 to 446, 460 to 464, 469 to 473, and 477 to 481. Residues 464-475 show a composition bias toward low complexity; sequence ASRLSPPTEESP. Composition is skewed to pro residues over residues 490-512 and 519-560; these read GCPP…PLSP and LSPP…PPPE. 4 repeat units span residues 520 to 524, 529 to 533, 538 to 542, and 547 to 551. Over residues 561-572 the composition is skewed to low complexity; it reads ASRLFPPFEESP. The segment covering 573–614 has biased composition (pro residues); it reads LSPPPEDSPLSPPPEASRLSPPPEDSPMSPPPEDSPMSPPPE. Tandem repeats lie at residues 574–578, 583–587, 592–596, and 610–614. A compositionally biased stretch (low complexity) spans 619–636; it reads LPLPVLSHLSPLPEVSRL. Repeat 15 spans residues 637–641; sequence SPPPE. Residues 637-677 are compositionally biased toward pro residues; that stretch reads SPPPEESPLSPPPEDSPASPPPEASRLSPPPEDSPASPPPE. A compositionally biased stretch (low complexity) spans 696 to 712; sequence DSLVSLPMEESPLSPLP. S727 carries the post-translational modification Phosphoserine. Low complexity-rich tracts occupy residues 735–755, 836–851, and 876–893; these read LCPQ…CLSP, PSQS…FSPS, and LPEE…LSPQ. Composition is skewed to pro residues over residues 894–908, 959–973, and 985–1012; these read LMPP…SPII, EPVP…PGSP, and LPPP…PPAL. Over residues 1013 to 1023 the composition is skewed to low complexity; that stretch reads PLSVPSPLSPV. A compositionally biased stretch (basic and acidic residues) spans 1033-1045; sequence AELHEMETDKGPE. 3 PHD-type zinc fingers span residues 1071–1124, 1121–1171, and 1198–1253; these read PSPA…PMEV, PMEV…SQGD, and LGVS…SPAR. Position 1107 is a phosphoserine (S1107). The span at 1163–1172 shows a compositional bias: polar residues; that stretch reads EISNLSQGDA. The RING-type 3; atypical zinc finger occupies 1201-1251; sequence STDVSPARDEGSLRLCTDSLPETDDSLLCDTGTATSGGKAEGDKGRRRSSP. The residue at position 1205 (S1205) is a Phosphoserine. T1223 is subject to Phosphothreonine. Residue S1226 is modified to Phosphoserine. The segment covering 1245–1258 has biased composition (basic residues); it reads GRRRSSPARSRIKQ. S1562 bears the Phosphoserine mark. Disordered regions lie at residues 1566-1721, 1751-1846, 1886-1962, and 2095-2641; these read KRRQ…SKLE, GRPG…MESK, GLAL…SLQR, and SADG…QRQR. The segment covering 1593–1608 has biased composition (basic and acidic residues); the sequence is PDDKKDGDLDTDDLLK. S1627 is modified (phosphoserine). Residues 1631–1641 are compositionally biased toward basic and acidic residues; sequence ELGKEETEESK. 2 stretches are compositionally biased toward basic residues: residues 1658–1668 and 1709–1718; these read RQRKSHTRVKR and KQQRRARKKS. A compositionally biased stretch (basic and acidic residues) spans 1762–1782; sequence PRADGGSDRKELMTAMHKGDD. S1791 is modified (phosphoserine). T1822 is modified (phosphothreonine). Residues 1831 to 1846 show a composition bias toward basic and acidic residues; that stretch reads DLDRIPTEELPKMESK. Low complexity-rich tracts occupy residues 1886–1896 and 1936–1947; these read GLALGSLPSSS and TTPSTPTTPTTE. Positions 2151–2166 are enriched in pro residues; the sequence is PTYPPYPSPTGAPAQP. The segment covering 2170–2181 has biased composition (low complexity); it reads GTTTRPGTGQPG. Phosphoserine is present on S2196. The residue at position 2197 (T2197) is a Phosphothreonine. At K2203 the chain carries N6-acetyllysine. Residues S2217 and S2231 each carry the phosphoserine modification. The span at 2237 to 2249 shows a compositional bias: basic and acidic residues; that stretch reads ESRKSLEVKKEEL. Phosphoserine is present on residues S2266, S2268, and S2299. Pro residues-rich tracts occupy residues 2308–2322 and 2331–2359; these read EPPP…PPSH and YPDP…PPRS. Residues 2366 to 2388 are compositionally biased toward low complexity; sequence SRVPASPQSQSSSQSPLTPRPLS. Over residues 2470–2486 the composition is skewed to polar residues; that stretch reads GQPTNFARSPGTGTFVG. R2492 bears the Asymmetric dimethylarginine mark. Pro residues predominate over residues 2504-2514; sequence LKPPVPQPGLP. Positions 2546-2557 are enriched in low complexity; it reads PSGSPLGPNSGP. S2597 is subject to Phosphoserine. The span at 2610–2622 shows a compositional bias: low complexity; sequence SSSSLATPELSSA. Residues 2627–2665 adopt a coiled-coil conformation; that stretch reads ISSLSQTELEKQRQRQRLRELLIRQQIQRNTLRQEKETA. The short motif at 2644–2648 is the LXXLL motif 1 element; it reads LRELL. The tract at residues 2655-2806 is disordered; that stretch reads RNTLRQEKET…QLWQQQQQQQ (152 aa). Low complexity predominate over residues 2665–2680; that stretch reads AAAAAGAVGPPGNWGA. Composition is skewed to polar residues over residues 2691–2704 and 2739–2748; these read SRGQ…QDRS and PSSMDMNSRQ. Residues 2768-2813 are a coiled coil; it reads LQQQQQQQQQQQQQQQQQQQQQQQQQQQQQLWQQQQQQQQQQQQQA. A compositionally biased stretch (low complexity) spans 2769-2806; that stretch reads QQQQQQQQQQQQQQQQQQQQQQQQQQQQQLWQQQQQQQ. At R2829 the chain carries Asymmetric dimethylarginine. An LXXLL motif 2 motif is present at residues 3030–3034; sequence LDDLL. Residues 3069–3104 are disordered; the sequence is NEKAEREALLRGVEPVSLGPEERPPPAPDNSEPRLT. At K3071 the chain carries N6-acetyllysine. S3122 and S3193 each carry phosphoserine. Disordered regions lie at residues 3129-3193 and 3271-3326; these read NTPK…LNPS and QQQQ…QSMV. A compositionally biased stretch (low complexity) spans 3271–3284; sequence QQQQQQQQQQQQQQ. K3430 carries the post-translational modification N6-acetyllysine. Disordered regions lie at residues 3460-3496, 3593-3617, 3633-3661, and 3678-3704; these read SGGS…TFAQ, RNKQ…VLAV, LLPA…GGMV, and QQQQ…NLAL. Residues 3559-3613 adopt a coiled-coil conformation; the sequence is EKLKLVTEQQSKIQKQLDQVRKQQKEHTNLMAEYRNKQQQQQQQQQQQQQQQHSA. Residues 3596-3610 are compositionally biased toward low complexity; sequence QQQQQQQQQQQQQQQ. Residues 3712-3747 adopt a coiled-coil conformation; sequence RLLQERQLQLQQQRMQLAQKLQQQQQQQQQQQQQQH. R3725 carries the asymmetric dimethylarginine modification. 2 disordered regions span residues 3760 to 3780 and 3808 to 3827; these read PGVQ…PSNH and LQQQ…QGPH. Coiled coils occupy residues 3854-3883 and 3912-4052; these read RLLT…QQQQ and SLQQ…QVTL. Residues 4053–4249 are disordered; that stretch reads GPGLPVKPLQ…QGPPGAGVMP (197 aa). 3 stretches are compositionally biased toward low complexity: residues 4128 to 4159, 4172 to 4183, and 4226 to 4240; these read SQLL…PQPQ, GQQLGSGSSSES, and GSQP…QSGQ. R4255 carries the asymmetric dimethylarginine modification. S4272 bears the Phosphoserine mark. The LXXLL motif 3 signature appears at 4279-4283; it reads LQALL. Residues 4290-4452 are disordered; it reads QSQAVRQTPP…SSLVPGHLDQ (163 aa). The segment covering 4294 to 4305 has biased composition (polar residues); that stretch reads VRQTPPFQEPGT. Residues 4307-4322 are compositionally biased toward low complexity; sequence PSPLQGLLGCQPQPGG. The LXXLL motif 4 motif lies at 4310–4314; the sequence is LQGLL. Residues 4379-4391 are compositionally biased toward polar residues; the sequence is QLPSPSAQLTPTH. Residue S4410 is modified to Phosphoserine. The span at 4432–4445 shows a compositional bias: polar residues; it reads DNLTEAQKPEQSSL. The short motif at 4514 to 4518 is the LXXLL motif 5 element; it reads LQKLL. Residue K4516 is modified to N6-acetyllysine. Disordered regions lie at residues 4553 to 4596, 4664 to 4716, and 4729 to 4778; these read LQGT…EDGV, KNNL…EGAL, and AALP…QLGS. Over residues 4670–4684 the composition is skewed to pro residues; it reads PPTPPSSLPPTPPPS. S4789 carries the post-translational modification Phosphoserine. K4807 is covalently cross-linked (Glycyl lysine isopeptide (Lys-Gly) (interchain with G-Cter in SUMO2)). K4827 carries the N6-acetyllysine modification. An RING-type 4; degenerate zinc finger spans residues 4829-4874; the sequence is KGSEVSVMLTVSAAAAKNLNGVMVAVAELLSMKIPNSYEVLFPDGP. Positions 4877–4908 are disordered; the sequence is AGLEPKKGEAEGPGGKEKGLSGKGPDTGPDWL. Residues 4879–4896 are compositionally biased toward basic and acidic residues; sequence LEPKKGEAEGPGGKEKGL. A Glycyl lysine isopeptide (Lys-Gly) (interchain with G-Cter in SUMO2) cross-link involves residue K4931. The disordered stretch occupies residues 4956-5031; that stretch reads QLSAPPPEEP…SEDSRPPRLK (76 aa). The span at 4959-4982 shows a compositional bias: pro residues; that stretch reads APPPEEPSPPPSPLAPSPASPPAE. The segment covering 5017 to 5027 has biased composition (basic and acidic residues); that stretch reads RPPEESEDSRP. The LXXLL motif 6 motif lies at 5041 to 5045; that stretch reads LRLLL. The C2HC pre-PHD-type 2 zinc finger occupies 5080–5120; sequence NRRCCFCHEEGDGATDGPARLLNLDLDLWVHLNCALWSTEV. The segment at 5141–5188 adopts a PHD-type 7 zinc-finger fold; it reads TKCSLCQRTGATSSCNRMRCPNVYHFACAIRAKCMFFKDKTMLCPVHK. The FYR N-terminal domain occupies 5226–5286; the sequence is LHMFRVGGLV…CCYRCSISEN (61 aa). Residues 5287 to 5372 enclose the FYR C-terminal domain; it reads NGRPEFVIKV…ESCQNYLFRY (86 aa). The short motif at 5388–5393 is the WDR5 interaction motif (WIN) element; sequence GCARSE. Residues 5448–5564 enclose the SET domain; the sequence is NNVYLARSRI…KGEELTYDYQ (117 aa). S-adenosyl-L-methionine contacts are provided by residues Y5502 and 5525-5526; that span reads NH. 4 residues coordinate Zn(2+): C5528, C5576, C5578, and C5583. In terms of domain architecture, Post-SET spans 5572–5588; that stretch reads HKIPCHCGAWNCRKWMN.

Belongs to the class V-like SAM-binding methyltransferase superfamily. Histone-lysine methyltransferase family. TRX/MLL subfamily. In terms of assembly, component of the MLL2 complex (also named ASCOM complex), at least composed of catalytic subunit KMT2D/MLL2, ASH2L, RBBP5, WDR5, NCOA6, DPY30, KDM6A, PAXIP1/PTIP, PAGR1 and alpha- and beta-tubulin. Forms a core complex with the evolutionary conserved subcomplex WRAD composed of WDR5, RBBP5, ASH2L/ASH2 and DPY30 subunits; WRAD differentially stimulates the methyltransferase activity. Interacts with ESR1; interaction is direct. Interacts (via WIN motif) with WDR5.

The protein localises to the nucleus. It catalyses the reaction L-lysyl(4)-[histone H3] + S-adenosyl-L-methionine = N(6)-methyl-L-lysyl(4)-[histone H3] + S-adenosyl-L-homocysteine + H(+). Functionally, histone methyltransferase that catalyzes methyl group transfer from S-adenosyl-L-methionine to the epsilon-amino group of 'Lys-4' of histone H3 (H3K4). Part of chromatin remodeling machinery predominantly forms H3K4me1 methylation marks at active chromatin sites where transcription and DNA repair take place. Acts as a coactivator for estrogen receptor by being recruited by ESR1, thereby activating transcription. The chain is Histone-lysine N-methyltransferase 2D (Kmt2d) from Mus musculus (Mouse).